We begin with the raw amino-acid sequence, 371 residues long: 4-hydroxy-3-methylbut-2-en-1-yl diphosphate synthase (flavodoxin) (371 aa).

[4Fe-4S] cluster contacts are provided by Cys270, Cys273, Cys305, and Glu312.

This sequence belongs to the IspG family. The cofactor is [4Fe-4S] cluster.

It carries out the reaction (2E)-4-hydroxy-3-methylbut-2-enyl diphosphate + oxidized [flavodoxin] + H2O + 2 H(+) = 2-C-methyl-D-erythritol 2,4-cyclic diphosphate + reduced [flavodoxin]. The protein operates within isoprenoid biosynthesis; isopentenyl diphosphate biosynthesis via DXP pathway; isopentenyl diphosphate from 1-deoxy-D-xylulose 5-phosphate: step 5/6. In terms of biological role, converts 2C-methyl-D-erythritol 2,4-cyclodiphosphate (ME-2,4cPP) into 1-hydroxy-2-methyl-2-(E)-butenyl 4-diphosphate. This Shewanella halifaxensis (strain HAW-EB4) protein is 4-hydroxy-3-methylbut-2-en-1-yl diphosphate synthase (flavodoxin).